Consider the following 52-residue polypeptide: Creatine kinase B-type (52 aa).

The 52-residue stretch at 1 to 52 folds into the Phosphagen kinase C-terminal domain; it reads AKVLTLDLYKKLRDKSTPSGFTLDDIIQNEHLGYVLTCPSNLGTXLRAXVHV. The region spanning 1–52 is the Phosphagen kinase N-terminal domain; sequence AKVLTLDLYKKLRDKSTPSGFTLDDIIQNEHLGYVLTCPSNLGTXLRAXVHV. Residues Arg13 and Arg47 each coordinate ATP.

This sequence belongs to the ATP:guanido phosphotransferase family. In terms of assembly, dimer of identical or non-identical chains, which can be either B (brain type) or M (muscle type). With MM being the major form in skeletal muscle and myocardium, MB existing in myocardium, and BB existing in many tissues, especially brain. As to expression, expressed in rectal gland, brain, skeletal muscle (at protein level).

The protein localises to the cytoplasm. It localises to the cytosol. Its subcellular location is the mitochondrion. The protein resides in the basal cell membrane. It carries out the reaction creatine + ATP = N-phosphocreatine + ADP + H(+). Functionally, reversibly catalyzes the transfer of phosphate between ATP and various phosphogens (e.g. creatine phosphate). Creatine kinase isoenzymes play a central role in energy transduction in tissues with large, fluctuating energy demands, such as skeletal muscle, heart, brain and spermatozoa. This is Creatine kinase B-type from Squalus acanthias (Spiny dogfish).